The primary structure comprises 233 residues: Fibrillarin-like rRNA/tRNA 2'-O-methyltransferase (233 aa).

S-adenosyl-L-methionine-binding positions include 90–91 (TT), 109–110 (EF), 134–135 (DA), and 154–157 (DVAQ).

It belongs to the methyltransferase superfamily. Fibrillarin family. In terms of assembly, interacts with nop5. Component of box C/D small ribonucleoprotein (sRNP) particles that contain rpl7ae, FlpA and nop5, plus a guide RNA.

Involved in pre-rRNA and tRNA processing. Utilizes the methyl donor S-adenosyl-L-methionine to catalyze the site-specific 2'-hydroxyl methylation of ribose moieties in rRNA and tRNA. Site specificity is provided by a guide RNA that base pairs with the substrate. Methylation occurs at a characteristic distance from the sequence involved in base pairing with the guide RNA. This Aeropyrum pernix (strain ATCC 700893 / DSM 11879 / JCM 9820 / NBRC 100138 / K1) protein is Fibrillarin-like rRNA/tRNA 2'-O-methyltransferase.